An 845-amino-acid polypeptide reads, in one-letter code: Matrin-3 (845 aa).

N-acetylserine is present on Ser-2. Residue Lys-3 is modified to N6-acetyllysine; alternate. Lys-3 participates in a covalent cross-link: Glycyl lysine isopeptide (Lys-Gly) (interchain with G-Cter in SUMO2); alternate. Phosphoserine is present on residues Ser-4, Ser-9, Ser-14, Ser-22, Ser-41, Ser-118, and Ser-126. Glycyl lysine isopeptide (Lys-Gly) (interchain with G-Cter in SUMO2) cross-links involve residues Lys-132 and Lys-146. Disordered regions lie at residues Arg-147–Pro-174 and Asp-187–Tyr-213. Thr-150 bears the Phosphothreonine mark. Ser-157 is subject to Phosphoserine. Position 158 is a phosphotyrosine (Tyr-158). The span at Arg-160–Pro-174 shows a compositional bias: basic and acidic residues. Residues Ser-164, Ser-188, and Ser-195 each carry the phosphoserine modification. Over residues Asp-201–Tyr-213 the composition is skewed to basic and acidic residues. Tyr-202 carries the phosphotyrosine modification. Residues Ser-206, Ser-208, and Ser-211 each carry the phosphoserine modification. At Tyr-219 the chain carries Phosphotyrosine. Ser-234 carries the phosphoserine modification. Residue Lys-245 forms a Glycyl lysine isopeptide (Lys-Gly) (interchain with G-Cter in SUMO2) linkage. Ser-264 is subject to Phosphoserine. Residue Lys-269 forms a Glycyl lysine isopeptide (Lys-Gly) (interchain with G-Cter in SUMO2) linkage. The residue at position 275 (Ser-275) is a Phosphoserine. A disordered region spans residues Pro-342–Val-394. The region spanning Arg-398–Lys-473 is the RRM 1 domain. Glycyl lysine isopeptide (Lys-Gly) (interchain with G-Cter in SUMO2) cross-links involve residues Lys-478, Lys-487, and Lys-491. Residues Arg-496–Lys-571 enclose the RRM 2 domain. Ser-509 and Ser-511 each carry phosphoserine. Residue Lys-515 forms a Glycyl lysine isopeptide (Lys-Gly) (interchain with G-Cter in SUMO2) linkage. Lys-522 carries the post-translational modification N6-acetyllysine; alternate. Lys-522 is covalently cross-linked (Glycyl lysine isopeptide (Lys-Gly) (interchain with G-Cter in SUMO2); alternate). Ser-533 carries the post-translational modification Phosphoserine. Residues Lys-554 and Lys-555 each participate in a glycyl lysine isopeptide (Lys-Gly) (interchain with G-Cter in SUMO2) cross-link. Position 571 is an N6-acetyllysine (Lys-571). Residues Lys-588–Asn-785 are disordered. A phosphoserine mark is found at Ser-596, Ser-598, Ser-604, and Ser-606. Residues Asp-600–Gln-643 show a composition bias toward basic and acidic residues. Residues Lys-617 and Lys-630 each participate in a glycyl lysine isopeptide (Lys-Gly) (interchain with G-Cter in SUMO2) cross-link. A compositionally biased stretch (acidic residues) spans Glu-653–Ala-665. Residues Ser-654, Ser-671, Ser-673, and Ser-674 each carry the phosphoserine modification. Thr-679 carries the post-translational modification Phosphothreonine. Ser-689 bears the Phosphoserine mark. The segment covering Ser-689 to Ala-704 has biased composition (basic and acidic residues). The short motif at Ser-708–Asp-716 is the Nuclear localization signal element. Residues Lys-717 and Lys-734 each participate in a glycyl lysine isopeptide (Lys-Gly) (interchain with G-Cter in SUMO2) cross-link. Phosphothreonine is present on Thr-739. Phosphoserine occurs at positions 745, 757, and 760. Basic and acidic residues predominate over residues Asp-765–Arg-778. Residue Lys-768 forms a Glycyl lysine isopeptide (Lys-Gly) (interchain with G-Cter in SUMO2) linkage. The Matrin-type zinc-finger motif lies at Phe-799–Lys-830. The residue at position 834 (Lys-834) is an N6-acetyllysine; alternate. Residue Lys-834 forms a Glycyl lysine isopeptide (Lys-Gly) (interchain with G-Cter in SUMO2); alternate linkage.

Part of a complex consisting of SFPQ, NONO and MATR3. Interacts with AGO1 and AGO2. Part of a complex composed at least of ASH2L, EMSY, HCFC1, HSPA8, CCAR2, MATR3, MKI67, RBBP5, TUBB2A, WDR5 and ZNF335; this complex may have a histone H3-specific methyltransferase activity. Interacts with TARDBP. Part of the HDP-RNP complex composed of at least HEXIM1, PRKDC, XRCC5, XRCC6, paraspeckle proteins (SFPQ, NONO, PSPC1, RBM14, and MATR3) and NEAT1 RNA. Interacts with FUS. Interacts with IGF2BP1. Interacts with IGF2BP2 and IGF2BP3. Interacts with RBPMS.

It is found in the nucleus matrix. Its function is as follows. May play a role in transcription or may interact with other nuclear matrix proteins to form the internal fibrogranular network. In association with the SFPQ-NONO heteromer may play a role in nuclear retention of defective RNAs. Plays a role in the regulation of DNA virus-mediated innate immune response by assembling into the HDP-RNP complex, a complex that serves as a platform for IRF3 phosphorylation and subsequent innate immune response activation through the cGAS-STING pathway. Binds to N6-methyladenosine (m6A)-containing mRNAs and contributes to MYC stability by binding to m6A-containing MYC mRNAs. May bind to specific miRNA hairpins. The sequence is that of Matrin-3 (Matr3) from Rattus norvegicus (Rat).